The chain runs to 290 residues: Cytochrome bo(3) ubiquinol oxidase subunit 2 (290 aa).

Residues 1–24 (MISINFNNFFKTLLLILIAFTLHG) form the signal peptide. Cys25 is lipidated: N-palmitoyl cysteine. Residue Cys25 is the site of S-diacylglycerol cysteine attachment. Residues 25-42 (CDSILFNPHGIIAIQECS) lie on the Extracellular side of the membrane. The helical transmembrane segment at 43–63 (ILLISFLIMLFVIIPVIFMTI) threads the bilayer. Residues 64-87 (YFSVKYRASNINAKYKPDWCDSKK) lie on the Cytoplasmic side of the membrane. Residues 88–108 (IEIIVWTIPISIILFLAFVTW) traverse the membrane as a helical segment. Residues 109 to 290 (NYSHILDPKK…TYSKNKVFKH (182 aa)) lie on the Extracellular side of the membrane.

The protein belongs to the cytochrome c oxidase subunit 2 family. In terms of assembly, heterooctamer of two A chains, two B chains, two C chains and two D chains.

The protein localises to the cell membrane. Functionally, cytochrome bo(3) ubiquinol terminal oxidase is the component of the aerobic respiratory chain of E.coli that predominates when cells are grown at high aeration. Has proton pump activity across the membrane in addition to electron transfer, pumping 2 protons/electron. This is Cytochrome bo(3) ubiquinol oxidase subunit 2 (cyoA) from Buchnera aphidicola subsp. Schizaphis graminum (strain Sg).